The sequence spans 767 residues: Transducin-like enhancer protein 2 (767 aa).

The interval 1–152 (MYPQGRHPTP…SLLGQQNQLQ (152 aa)) is q domain. Residues 153-215 (PLSHAPPVPL…SRVDRAASRS (63 aa)) form a GP domain region. Basic and acidic residues predominate over residues 198–212 (RVGVDAEGSRVDRAA). 3 disordered regions span residues 198–257 (RVGV…EEDK), 264–283 (VDEDQPSEPPSPVTTPCGKA), and 296–346 (SPAS…SSAS). The ccN domain stretch occupies residues 216-279 (SSPSPPESLV…SEPPSPVTTP (64 aa)). A Nuclear localization signal motif is present at residues 238 to 242 (KQQRA). Ser-253 bears the Phosphoserine; by CK2 mark. Ser-274 carries the phosphoserine; by CDK1 modification. The residue at position 278 (Thr-278) is a Phosphothreonine; by CDK1. An SP domain region spans residues 280-447 (CGKAPLCIPA…VAKPAYSFHV (168 aa)). Low complexity predominate over residues 296-309 (SPASLASSLGSPLP). Position 306 is a phosphoserine (Ser-306). The segment covering 323 to 346 (TPASRSCGTSPPQDSSTPGPSSAS) has biased composition (polar residues). WD repeat units lie at residues 479 to 517 (AHGEVVCAVTISSSTQHVYTGGKGCVKVWDVGQPGSKTP), 525 to 564 (NRDNYIRSCKLLPDGQSLIVGGEASTLSIWDLAAPTPRIK), 569 to 608 (SSAPACYALAVSPDAKVCFSCCSDGNIVVWDLQNQAMVRQ), 611 to 650 (GHTDGASCIDISDYGTRLWTGGLDNTVRCWDLREGRQLQQ), 693 to 732 (LHESCVLSLKFASCGRWFVSTGKDNLLNAWRTPYGASIFQ), and 734 to 766 (KESSSVLSCDISRNNKYIVTGSGDKKATVYEVV).

This sequence belongs to the WD repeat Groucho/TLE family. As to quaternary structure, homooligomer and heterooligomer with other family members. Binds LEF1, TCF7, TCF7L1, TCF7L2, UTY, HES1 and HES5. Post-translationally, ubiquitinated by XIAP/BIRC4. Expressed in bone marrow-derived macrophages.

The protein resides in the nucleus. Transcriptional corepressor that binds to a number of transcription factors. Inhibits the transcriptional activation mediated by CTNNB1 and TCF family members in Wnt signaling. The effects of full-length TLE family members may be modulated by association with dominant-negative AES. The protein is Transducin-like enhancer protein 2 (Tle2) of Mus musculus (Mouse).